A 1325-amino-acid chain; its full sequence is NHS-like protein 3 (1325 aa).

Positions 53–85 (LEDLHTEAQEGLKILQQEEEDTSSKERNESLEN) form a coiled coil. 10 disordered regions span residues 68-92 (QQEEEDTSSKERNESLENDSTSGHS), 111-131 (QGSTFKPLNPVKRLDKSKRRS), 291-348 (CSAS…KGKC), 368-570 (MSVS…AKTS), 595-614 (QTNTTSSEPLKFSPPLTTVK), 829-891 (EVNG…MEES), 935-981 (LLST…VSEF), 1084-1138 (VGED…SSAV), 1243-1272 (GTKKPIKVPPPVAKKPVHGSNPPNKMENAT), and 1293-1313 (SDQVHPAGQRAQSLGNQEQAS). The span at 296–334 (ASKGSMASASPSSSRSGSGTNQAPPTTSPSRSNSQSSET) shows a compositional bias: low complexity. Over residues 335–344 (IVSNSSTISS) the composition is skewed to polar residues. Over residues 369 to 378 (SVSSSSSWKS) the composition is skewed to low complexity. A compositionally biased stretch (polar residues) spans 400-412 (VRNSHSFSRSLSV). The segment covering 428 to 447 (LHHENMQRQREQGDIQDPKD) has biased composition (basic and acidic residues). Positions 450-460 (PNNNEQTNRDI) are enriched in polar residues. The span at 515–524 (KTRECGENFD) shows a compositional bias: basic and acidic residues. Over residues 528–541 (SPSSGYSSQSGTPT) the composition is skewed to low complexity. Residues 834–850 (SPPPSPPPEHHPPPPPI) are compositionally biased toward pro residues. 2 stretches are compositionally biased toward polar residues: residues 935 to 948 (LLSTNVSDMDSSPE) and 1088 to 1100 (QVNNDSKPSTEPT). The segment covering 1124 to 1138 (KSNSPAKSSSASSAV) has biased composition (low complexity). Positions 1302–1311 (RAQSLGNQEQ) are enriched in polar residues.

Able to directly activate the TNF-NFkappaB signaling pathway. This is NHS-like protein 3 (nhsl3) from Danio rerio (Zebrafish).